The primary structure comprises 231 residues: Orotate phosphoribosyltransferase (231 aa).

5-phospho-alpha-D-ribose 1-diphosphate contacts are provided by residues K27, 79–80, R106, K107, K110, H112, and 133–141; these read YK and DDVMTAGTA. T137 and R166 together coordinate orotate.

This sequence belongs to the purine/pyrimidine phosphoribosyltransferase family. PyrE subfamily. Homodimer. Mg(2+) serves as cofactor.

It catalyses the reaction orotidine 5'-phosphate + diphosphate = orotate + 5-phospho-alpha-D-ribose 1-diphosphate. It functions in the pathway pyrimidine metabolism; UMP biosynthesis via de novo pathway; UMP from orotate: step 1/2. In terms of biological role, catalyzes the transfer of a ribosyl phosphate group from 5-phosphoribose 1-diphosphate to orotate, leading to the formation of orotidine monophosphate (OMP). This Bifidobacterium adolescentis (strain ATCC 15703 / DSM 20083 / NCTC 11814 / E194a) protein is Orotate phosphoribosyltransferase.